Reading from the N-terminus, the 361-residue chain is Ribosomal RNA large subunit methyltransferase M (361 aa).

S-adenosyl-L-methionine is bound by residues S187, 220–223 (CPGG), D239, D259, and D276. The Proton acceptor role is filled by K305.

It belongs to the class I-like SAM-binding methyltransferase superfamily. RNA methyltransferase RlmE family. RlmM subfamily. In terms of assembly, monomer.

It is found in the cytoplasm. The catalysed reaction is cytidine(2498) in 23S rRNA + S-adenosyl-L-methionine = 2'-O-methylcytidine(2498) in 23S rRNA + S-adenosyl-L-homocysteine + H(+). Its function is as follows. Catalyzes the 2'-O-methylation at nucleotide C2498 in 23S rRNA. The chain is Ribosomal RNA large subunit methyltransferase M from Shewanella putrefaciens (strain CN-32 / ATCC BAA-453).